Consider the following 255-residue polypeptide: 3-deoxy-manno-octulosonate cytidylyltransferase (255 aa).

Belongs to the KdsB family.

The protein resides in the cytoplasm. It catalyses the reaction 3-deoxy-alpha-D-manno-oct-2-ulosonate + CTP = CMP-3-deoxy-beta-D-manno-octulosonate + diphosphate. The protein operates within nucleotide-sugar biosynthesis; CMP-3-deoxy-D-manno-octulosonate biosynthesis; CMP-3-deoxy-D-manno-octulosonate from 3-deoxy-D-manno-octulosonate and CTP: step 1/1. It functions in the pathway bacterial outer membrane biogenesis; lipopolysaccharide biosynthesis. Its function is as follows. Activates KDO (a required 8-carbon sugar) for incorporation into bacterial lipopolysaccharide in Gram-negative bacteria. The polypeptide is 3-deoxy-manno-octulosonate cytidylyltransferase (Hahella chejuensis (strain KCTC 2396)).